A 260-amino-acid chain; its full sequence is Proteasome subunit alpha (260 aa).

The segment at 241–260 (VEEEEVKEKEEDYSELDSHY) is disordered.

Belongs to the peptidase T1A family. As to quaternary structure, the 20S proteasome core is composed of 14 alpha and 14 beta subunits that assemble into four stacked heptameric rings, resulting in a barrel-shaped structure. The two inner rings, each composed of seven catalytic beta subunits, are sandwiched by two outer rings, each composed of seven alpha subunits. The catalytic chamber with the active sites is on the inside of the barrel. Has a gated structure, the ends of the cylinder being occluded by the N-termini of the alpha-subunits. Is capped at one or both ends by the proteasome regulatory ATPase, PAN.

It localises to the cytoplasm. With respect to regulation, the formation of the proteasomal ATPase PAN-20S proteasome complex, via the docking of the C-termini of PAN into the intersubunit pockets in the alpha-rings, triggers opening of the gate for substrate entry. Interconversion between the open-gate and close-gate conformations leads to a dynamic regulation of the 20S proteasome proteolysis activity. Functionally, component of the proteasome core, a large protease complex with broad specificity involved in protein degradation. The protein is Proteasome subunit alpha of Pyrococcus horikoshii (strain ATCC 700860 / DSM 12428 / JCM 9974 / NBRC 100139 / OT-3).